A 220-amino-acid polypeptide reads, in one-letter code: Guanylate kinase (220 aa).

The 178-residue stretch at 3–180 folds into the Guanylate kinase-like domain; sequence GRLFVMTGAS…AVADFLAILT (178 aa). 10-17 is an ATP binding site; sequence GASGVGKG.

This sequence belongs to the guanylate kinase family.

Its subcellular location is the cytoplasm. It catalyses the reaction GMP + ATP = GDP + ADP. Essential for recycling GMP and indirectly, cGMP. This is Guanylate kinase from Thermus thermophilus (strain ATCC BAA-163 / DSM 7039 / HB27).